We begin with the raw amino-acid sequence, 1456 residues long: ABC-type transporter eriD (1456 aa).

Residues 1-65 are disordered; the sequence is MAENEKVTYG…DPRMDPLSGK (65 aa). The span at 30–40 shows a compositional bias: polar residues; the sequence is SMTNASRSSVY. An ABC transporter 1 domain is found at 118-372; sequence LDIPGLARDI…FIDMGFECPP (255 aa). A run of 6 helical transmembrane segments spans residues 481–501, 515–535, 561–581, 590–610, 623–643, and 734–754; these read NFLTSVIGNFILALIISSIFY, ALLFFAILMNAFASSLEILQI, VLCDLPGKVIASFAFNLVLYF, GAFFTFYLFSLMCILVMSMIF, AMAPSSVILLALVIFTGFTIP, and ILFGFIAFFACTYLFATEFIA. Residues 775 to 799 form a disordered region; sequence EGASEDEEAGTGSTGTRTQEEPVDK. The ABC transporter 2 domain occupies 813-1056; the sequence is FHWEDVIYDI…IIDYFEGQGA (244 aa). 849–856 is a binding site for ATP; that stretch reads GASGAGKT. Helical transmembrane passes span 1148 to 1168, 1184 to 1204, 1233 to 1253, 1269 to 1289, 1301 to 1321, 1337 to 1357, and 1423 to 1443; these read YIYSKIFLVAGSNLLIGFSFF, VFMGLTVFGNLVNQIMPHFVT, LPWNTLAGVVLFFCWYYPVGM, LMFLLIWQFMLFTSTFAHMLI, IASLLFSLTFLFCGVLAGPSG, PFTYLVEAMVSVGVANAPAFC, and FGFLWVFILFNIGMAVFFYWL.

Belongs to the ABC transporter superfamily. ABCG family. PDR (TC 3.A.1.205) subfamily.

The protein resides in the membrane. Its function is as follows. ABC-type transporter; part of the gene cluster that mediates the biosynthesis of erinacines, cyathane-xylosides that show unique biological activities, including leishmanicidal activity, stimulating activity for nerve growth-factor synthesis, and agonistic activity toward the kappa opioid receptor. The polypeptide is ABC-type transporter eriD (Hericium erinaceus (Lion's mane mushroom)).